Consider the following 419-residue polypeptide: UDP-N-acetylglucosamine 1-carboxyvinyltransferase (419 aa).

22–23 (KN) provides a ligand contact to phosphoenolpyruvate. Residue arginine 95 participates in UDP-N-acetyl-alpha-D-glucosamine binding. Cysteine 119 acts as the Proton donor in catalysis. Cysteine 119 is modified (2-(S-cysteinyl)pyruvic acid O-phosphothioketal). UDP-N-acetyl-alpha-D-glucosamine-binding positions include 164–167 (KVSV), aspartate 308, and isoleucine 330.

This sequence belongs to the EPSP synthase family. MurA subfamily.

It is found in the cytoplasm. The enzyme catalyses phosphoenolpyruvate + UDP-N-acetyl-alpha-D-glucosamine = UDP-N-acetyl-3-O-(1-carboxyvinyl)-alpha-D-glucosamine + phosphate. It functions in the pathway cell wall biogenesis; peptidoglycan biosynthesis. Cell wall formation. Adds enolpyruvyl to UDP-N-acetylglucosamine. This is UDP-N-acetylglucosamine 1-carboxyvinyltransferase from Rickettsia prowazekii (strain Madrid E).